We begin with the raw amino-acid sequence, 1239 residues long: DNA topoisomerase 2 (1239 aa).

ATP is bound by residues N65, N96, 124-126, 137-144, and 354-356; these read SSN, GRHGYGAK, and QSK. A Toprim domain is found at 434–548; sequence RTLIVTEGDS…SLLQHNPGYI (115 aa). Residues E440, D517, and D519 each contribute to the Mg(2+) site. The Topo IIA-type catalytic domain occupies 685–1101; sequence IPHCVDGLKP…TPVKMWLTDL (417 aa). Y775 (O-(5'-phospho-DNA)-tyrosine intermediate) is an active-site residue. Positions 956–965 are interaction with DNA; that stretch reads ALSQRIYING. The segment at 1167–1206 is disordered; it reads PASKRKPEDTYGGALSSGGSTRNVGKRLTGARGAKKKKVV.

This sequence belongs to the type II topoisomerase family. In terms of assembly, homodimer. It depends on Mg(2+) as a cofactor. Mn(2+) is required as a cofactor. The cofactor is Ca(2+).

Its subcellular location is the nucleus. It is found in the mitochondrion matrix. The protein resides in the kinetoplast. The catalysed reaction is ATP-dependent breakage, passage and rejoining of double-stranded DNA.. In terms of biological role, control of topological states of DNA by transient breakage and subsequent rejoining of DNA strands. Topoisomerase II makes double-strand breaks. This is DNA topoisomerase 2 (TOP2) from Crithidia fasciculata.